The sequence spans 493 residues: MSSNKLLKSFTEGIFTDLKLTLVDDYQQSITINVHKIILYIKCTFFEKLLLFNDGNITEKTINVPNVYVCRDIIESFYLVDNKSEVDKSQTNQDPMYQFQLYICRDFLGLLQDKNALFNLDIPINMLDDFFNFAELYSNNNNMIRLIFRNIPKNYDFELIPKNLLLAMKKYVSESRMYILDDEYKLIQYDLCPENLSSKIITHRIFNRKYNSEKYIYALGENDFAIVKNNTIEIYDYQNEELINQIQIGQLLINDIKDIEYCETNLLIVTGYTLLLINSDNGKILKHKKFDEHIKYVTFTINCIYVNFKKRIKVLNYETMDLIKDIECDNRHDYVGGKIIYDLSENDLSGCIIVEDVLSDKIISFNHPTGIIKRIYGLDVDFRFEKYVVVDWSDIIKIFDVKHGTLLSEYNIGKISEKYQLNNVTVLYAKFLHDTRYIIIKMNFGNYFVLDTLKQELMTISSKSLNEYRTHYKISSYCQYLPEINSALLNQID.

Residues 16-87 (TDLKLTLVDD…YLVDNKSEVD (72 aa)) enclose the BTB domain.

Belongs to the mimivirus BTB/WD family.

In Acanthamoeba polyphaga (Amoeba), this protein is Putative BTB/POZ domain-containing protein L35.